The chain runs to 365 residues: PDZ and LIM domain protein 3 (365 aa).

The 84-residue stretch at 1-84 (MPQNVILPGP…QLCLKIDRAE (84 aa)) folds into the PDZ domain. Position 18 is a phosphoserine (S18). Positions 126-156 (FIIPGRSSGCSTPSGIDGGSGRSTPSSVSTL) are disordered. Residues 147–156 (RSTPSSVSTL) are compositionally biased toward polar residues. The 60-residue stretch at 293 to 352 (PLCDKCGSGIVGAVVKARDKYRHPECFVCADCNLNLKQKGYFFVEGELYCETHARARMRP) folds into the LIM zinc-binding domain.

In terms of assembly, interacts with ACTN2. Forms a heterodimer with PDLIM4 (via LIM domain).

Its subcellular location is the cytoplasm. The protein localises to the myofibril. The protein resides in the sarcomere. It localises to the z line. Its function is as follows. May play a role in the organization of actin filament arrays within muscle cells. In Sus scrofa (Pig), this protein is PDZ and LIM domain protein 3 (PDLIM3).